The sequence spans 287 residues: MPDRRTLLLTVLAMLAFAGNSLLCRAALKDTAIDAVSFTALRLFSGALMLAVLLHLRRRPATPARGGWRGAAALFVYAAAFSYAYVQLDAGTGALLLFGAVQVTLLLAGLLRGERLGGQALLGFLLALGGLLFLLLPGASAPPLGGALLMLLSGLAWGLYTLLGRGGGDPLAVSAGNFLRALAFAALLLLAFHGQLRLDGAGLAYALLSGALASGLGYAVWYSALPGLTAIQGASVQLSVPVLAALCGALLLGEPLAPRLPPATLAVLGGIALILAPRLGRAAREGA.

The next 10 helical transmembrane spans lie at 7–28, 32–54, 67–86, 91–113, 120–139, 144–163, 170–192, 202–224, 231–253, and 263–280; these read LLLTVLAMLAFAGNSLLCRAAL, AIDAVSFTALRLFSGALMLAVLL, GWRGAAALFVYAAAFSYAYV, GTGALLLFGAVQVTLLLAGLLRG, ALLGFLLALGGLLFLLLPGA, LGGALLMLLSGLAWGLYTLL, PLAVSAGNFLRALAFAALLLLAF, GLAYALLSGALASGLGYAVWYSA, IQGASVQLSVPVLAALCGALLLG, and ATLAVLGGIALILAPRLG. EamA domains are found at residues 15 to 136 and 155 to 276; these read LAFA…FLLL and LAWG…LILA.

The protein resides in the cell membrane. This is an uncharacterized protein from Pseudomonas aeruginosa (strain ATCC 15692 / DSM 22644 / CIP 104116 / JCM 14847 / LMG 12228 / 1C / PRS 101 / PAO1).